Here is a 523-residue protein sequence, read N- to C-terminus: Mediator of RNA polymerase II transcription subunit 1.2 (523 aa).

Belongs to the Mediator complex subunit 1 family. In terms of assembly, component of the Mediator complex.

The protein resides in the nucleus. Its function is as follows. Component of the Mediator complex, a coactivator involved in the regulated transcription of nearly all RNA polymerase II-dependent genes. Mediator functions as a bridge to convey information from gene-specific regulatory proteins to the basal RNA polymerase II transcription machinery. Mediator is recruited to promoters by direct interactions with regulatory proteins and serves as a scaffold for the assembly of a functional preinitiation complex with RNA polymerase II and the general transcription factors. The sequence is that of Mediator of RNA polymerase II transcription subunit 1.2 (mdt-1.2) from Caenorhabditis briggsae.